The following is a 188-amino-acid chain: Crossover junction endodeoxyribonuclease RuvC (188 aa).

Residues D7, E68, and D141 contribute to the active site. Mg(2+) contacts are provided by D7, E68, and D141.

The protein belongs to the RuvC family. In terms of assembly, homodimer which binds Holliday junction (HJ) DNA. The HJ becomes 2-fold symmetrical on binding to RuvC with unstacked arms; it has a different conformation from HJ DNA in complex with RuvA. In the full resolvosome a probable DNA-RuvA(4)-RuvB(12)-RuvC(2) complex forms which resolves the HJ. It depends on Mg(2+) as a cofactor.

The protein localises to the cytoplasm. It catalyses the reaction Endonucleolytic cleavage at a junction such as a reciprocal single-stranded crossover between two homologous DNA duplexes (Holliday junction).. In terms of biological role, the RuvA-RuvB-RuvC complex processes Holliday junction (HJ) DNA during genetic recombination and DNA repair. Endonuclease that resolves HJ intermediates. Cleaves cruciform DNA by making single-stranded nicks across the HJ at symmetrical positions within the homologous arms, yielding a 5'-phosphate and a 3'-hydroxyl group; requires a central core of homology in the junction. The consensus cleavage sequence is 5'-(A/T)TT(C/G)-3'. Cleavage occurs on the 3'-side of the TT dinucleotide at the point of strand exchange. HJ branch migration catalyzed by RuvA-RuvB allows RuvC to scan DNA until it finds its consensus sequence, where it cleaves and resolves the cruciform DNA. This is Crossover junction endodeoxyribonuclease RuvC from Mycobacterium tuberculosis (strain ATCC 25177 / H37Ra).